The sequence spans 304 residues: MPQQLSPINIETKKAISDTRLKTLDIHYNESKPTTIQNTGKLVRINFKGGYISGGFLPNEYVLSTIHIYWGKEDDYGSNHLIDVYKYSGEINLVHWNKKKYSSYEEAKKHDDGIIIIAIFLQVSDHKNVYFQKIVNQLDSIRSANMSAPFDSVFYLDNLLPSTLDYFTYLGTTINHSADAAWIIFPTPINIHSDQLSKFRTLLSSSNHEGKPHYITENYRNPYKLNDDTQVYYSGEIIRAATTSPVRENYFMKWLSDLREACFSYYQKYIEGNKTFAIIAIVFVFILTAILFLMSQRYSREKQN.

The Alpha-carbonic anhydrase domain maps to 1–235; that stretch reads MPQQLSPINI…NDDTQVYYSG (235 aa). Over 1–275 the chain is Virion surface; sequence MPQQLSPINI…YQKYIEGNKT (275 aa). A helical membrane pass occupies residues 276 to 294; it reads FAIIAIVFVFILTAILFLM. The Intravirion segment spans residues 295–304; sequence SQRYSREKQN.

The protein belongs to the alpha-carbonic anhydrase family. Homodimer; disulfide-linked. Apparently non-glycosylated.

It is found in the virion membrane. In terms of biological role, binds to chondroitin sulfate on the cell surface to provide virion attachment to target cell. This is Cell surface-binding protein OPG105 (OPG105) from Monkeypox virus (strain Zaire-96-I-16) (MPX).